Here is a 494-residue protein sequence, read N- to C-terminus: Aspartyl/glutamyl-tRNA(Asn/Gln) amidotransferase subunit B (494 aa).

This sequence belongs to the GatB/GatE family. GatB subfamily. In terms of assembly, heterotrimer of A, B and C subunits.

The enzyme catalyses L-glutamyl-tRNA(Gln) + L-glutamine + ATP + H2O = L-glutaminyl-tRNA(Gln) + L-glutamate + ADP + phosphate + H(+). It carries out the reaction L-aspartyl-tRNA(Asn) + L-glutamine + ATP + H2O = L-asparaginyl-tRNA(Asn) + L-glutamate + ADP + phosphate + 2 H(+). In terms of biological role, allows the formation of correctly charged Asn-tRNA(Asn) or Gln-tRNA(Gln) through the transamidation of misacylated Asp-tRNA(Asn) or Glu-tRNA(Gln) in organisms which lack either or both of asparaginyl-tRNA or glutaminyl-tRNA synthetases. The reaction takes place in the presence of glutamine and ATP through an activated phospho-Asp-tRNA(Asn) or phospho-Glu-tRNA(Gln). The polypeptide is Aspartyl/glutamyl-tRNA(Asn/Gln) amidotransferase subunit B (Rhodopseudomonas palustris (strain BisB5)).